A 271-amino-acid chain; its full sequence is Small ribosomal subunit protein uS9m (271 aa).

The N-terminal 11 residues, 1 to 11 (MFRSLAKLRCF), are a transit peptide targeting the mitochondrion. Residues 251-271 (KVERKKTGQPKARKKYTWVKR) are disordered. Basic residues predominate over residues 252–271 (VERKKTGQPKARKKYTWVKR).

This sequence belongs to the universal ribosomal protein uS9 family. In terms of assembly, component of the mitochondrial small ribosomal subunit (mt-SSU). Mature yeast 74S mitochondrial ribosomes consist of a small (37S) and a large (54S) subunit. The 37S small subunit contains a 15S ribosomal RNA (15S mt-rRNA) and at least 32 different proteins. The 54S large subunit contains a 21S rRNA (21S mt-rRNA) and at least 45 different proteins.

The protein resides in the mitochondrion. In terms of biological role, component of the mitochondrial ribosome (mitoribosome), a dedicated translation machinery responsible for the synthesis of mitochondrial genome-encoded proteins, including at least some of the essential transmembrane subunits of the mitochondrial respiratory chain. The mitoribosomes are attached to the mitochondrial inner membrane and translation products are cotranslationally integrated into the membrane. The sequence is that of Small ribosomal subunit protein uS9m (mrps9) from Schizosaccharomyces pombe (strain 972 / ATCC 24843) (Fission yeast).